The following is a 492-amino-acid chain: MSKNLTTRAEDYSKWYNELVVRADLAENSGVRGCMVIKPYGYAIWEKMQAELDRMFKETGHSNAYFPLFVPKSMFEAEEKNAEGFAKECAIVTHYRLKNDPDKPGKLMVDPNAKLEEELIVRPTSEAIIWSTYKGWIQSYRDLPLLINQWANVVRWEMRTRLFLRTAEFLWQEGHTAHATRKEAIEESEKMMNVYADFAQNFMAIPVIKGLKTETERFAGAEETYCIEALMQDGKALQAGTSHFLGQNFAKAFDVKFANAEGKQEHVWGTSWGVSTRLMGALVMTHSDDNGLVLPPNLAPIQVVIVPIFKTDEEFEKISALANDLISQFKKLNISVKFDNRTTQKPGFKFAEWELKGVPVRIAIGPKDLENETFEIARRDTLTKEVKPKEGIVKYISDLLAQIQSDLFSKALQYRDTHITEVSDFEEFKKVLENKGGFISAHWDGTPETEEKIKELTKATIRCIALNRKEEIGNCMFTGKQSVGRVLFAKAY.

This sequence belongs to the class-II aminoacyl-tRNA synthetase family. ProS type 3 subfamily. In terms of assembly, homodimer.

It is found in the cytoplasm. It catalyses the reaction tRNA(Pro) + L-proline + ATP = L-prolyl-tRNA(Pro) + AMP + diphosphate. In terms of biological role, catalyzes the attachment of proline to tRNA(Pro) in a two-step reaction: proline is first activated by ATP to form Pro-AMP and then transferred to the acceptor end of tRNA(Pro). The protein is Proline--tRNA ligase of Flavobacterium psychrophilum (strain ATCC 49511 / DSM 21280 / CIP 103535 / JIP02/86).